Here is a 238-residue protein sequence, read N- to C-terminus: Probable transcriptional regulatory protein Sde_1551 (238 aa).

The protein belongs to the TACO1 family.

The protein localises to the cytoplasm. This is Probable transcriptional regulatory protein Sde_1551 from Saccharophagus degradans (strain 2-40 / ATCC 43961 / DSM 17024).